Here is a 291-residue protein sequence, read N- to C-terminus: Tyrosine isonitrile desaturase (291 aa).

3 residues coordinate Fe cation: His110, Asp112, and His259.

It belongs to the TfdA dioxygenase family. In terms of assembly, homotrimer in solution. Fe(2+) is required as a cofactor.

It catalyses the reaction (2S)-3-(4-hydroxyphenyl)-2-isocyanopropanoate + 2-oxoglutarate + O2 = (2E)-3-(4-hydroxyphenyl)-2-isocyanoprop-2-enoate + succinate + CO2 + H2O. Its function is as follows. Involved in the biosynthesis of paerucumarin, a cyclized isocyano derivative of tyrosine. Catalyzes the 2-oxoglutarate-dependent oxidation of tyrosine isonitrile. The chain is Tyrosine isonitrile desaturase from Pseudomonas aeruginosa (strain ATCC 15692 / DSM 22644 / CIP 104116 / JCM 14847 / LMG 12228 / 1C / PRS 101 / PAO1).